We begin with the raw amino-acid sequence, 316 residues long: 4-hydroxy-3-methylbut-2-enyl diphosphate reductase (316 aa).

[4Fe-4S] cluster is bound at residue Cys12. Positions 43 and 81 each coordinate (2E)-4-hydroxy-3-methylbut-2-enyl diphosphate. Dimethylallyl diphosphate contacts are provided by His43 and His81. Residues His43 and His81 each coordinate isopentenyl diphosphate. Residue Cys103 coordinates [4Fe-4S] cluster. (2E)-4-hydroxy-3-methylbut-2-enyl diphosphate is bound at residue His131. Position 131 (His131) interacts with dimethylallyl diphosphate. His131 contributes to the isopentenyl diphosphate binding site. Glu133 (proton donor) is an active-site residue. Thr170 lines the (2E)-4-hydroxy-3-methylbut-2-enyl diphosphate pocket. Cys198 contributes to the [4Fe-4S] cluster binding site. Residues Ser226, Asn228, and Ser271 each coordinate (2E)-4-hydroxy-3-methylbut-2-enyl diphosphate. Dimethylallyl diphosphate-binding residues include Ser226, Asn228, and Ser271. 3 residues coordinate isopentenyl diphosphate: Ser226, Asn228, and Ser271.

This sequence belongs to the IspH family. The cofactor is [4Fe-4S] cluster.

It catalyses the reaction isopentenyl diphosphate + 2 oxidized [2Fe-2S]-[ferredoxin] + H2O = (2E)-4-hydroxy-3-methylbut-2-enyl diphosphate + 2 reduced [2Fe-2S]-[ferredoxin] + 2 H(+). It carries out the reaction dimethylallyl diphosphate + 2 oxidized [2Fe-2S]-[ferredoxin] + H2O = (2E)-4-hydroxy-3-methylbut-2-enyl diphosphate + 2 reduced [2Fe-2S]-[ferredoxin] + 2 H(+). Its pathway is isoprenoid biosynthesis; dimethylallyl diphosphate biosynthesis; dimethylallyl diphosphate from (2E)-4-hydroxy-3-methylbutenyl diphosphate: step 1/1. It participates in isoprenoid biosynthesis; isopentenyl diphosphate biosynthesis via DXP pathway; isopentenyl diphosphate from 1-deoxy-D-xylulose 5-phosphate: step 6/6. Its function is as follows. Catalyzes the conversion of 1-hydroxy-2-methyl-2-(E)-butenyl 4-diphosphate (HMBPP) into a mixture of isopentenyl diphosphate (IPP) and dimethylallyl diphosphate (DMAPP). Acts in the terminal step of the DOXP/MEP pathway for isoprenoid precursor biosynthesis. The protein is 4-hydroxy-3-methylbut-2-enyl diphosphate reductase of Bacillus cereus (strain B4264).